The sequence spans 592 residues: Proline--tRNA ligase (592 aa).

This sequence belongs to the class-II aminoacyl-tRNA synthetase family. ProS type 1 subfamily. As to quaternary structure, homodimer.

It localises to the cytoplasm. The enzyme catalyses tRNA(Pro) + L-proline + ATP = L-prolyl-tRNA(Pro) + AMP + diphosphate. Functionally, catalyzes the attachment of proline to tRNA(Pro) in a two-step reaction: proline is first activated by ATP to form Pro-AMP and then transferred to the acceptor end of tRNA(Pro). As ProRS can inadvertently accommodate and process non-cognate amino acids such as alanine and cysteine, to avoid such errors it has two additional distinct editing activities against alanine. One activity is designated as 'pretransfer' editing and involves the tRNA(Pro)-independent hydrolysis of activated Ala-AMP. The other activity is designated 'posttransfer' editing and involves deacylation of mischarged Ala-tRNA(Pro). The misacylated Cys-tRNA(Pro) is not edited by ProRS. This Corynebacterium urealyticum (strain ATCC 43042 / DSM 7109) protein is Proline--tRNA ligase.